The chain runs to 308 residues: Glutaminase (308 aa).

The substrate site is built by S66, N117, E162, N169, Y193, Y244, and V262.

It belongs to the glutaminase family. In terms of assembly, homotetramer.

It carries out the reaction L-glutamine + H2O = L-glutamate + NH4(+). In Natranaerobius thermophilus (strain ATCC BAA-1301 / DSM 18059 / JW/NM-WN-LF), this protein is Glutaminase.